Reading from the N-terminus, the 250-residue chain is Type III pantothenate kinase (250 aa).

13–20 lines the ATP pocket; the sequence is DVGNSYLK. 110 to 113 lines the substrate pocket; that stretch reads GNDL. The active-site Proton acceptor is the Asp-112. Thr-134 contributes to the ATP binding site. Position 186 (Thr-186) interacts with substrate.

Belongs to the type III pantothenate kinase family. As to quaternary structure, homodimer. NH4(+) serves as cofactor. It depends on K(+) as a cofactor.

It is found in the cytoplasm. The enzyme catalyses (R)-pantothenate + ATP = (R)-4'-phosphopantothenate + ADP + H(+). It functions in the pathway cofactor biosynthesis; coenzyme A biosynthesis; CoA from (R)-pantothenate: step 1/5. Catalyzes the phosphorylation of pantothenate (Pan), the first step in CoA biosynthesis. The chain is Type III pantothenate kinase from Mycoplasmopsis synoviae (strain 53) (Mycoplasma synoviae).